The chain runs to 233 residues: Small ribosomal subunit protein uS2 (233 aa).

Belongs to the universal ribosomal protein uS2 family.

In Bacillus mycoides (strain KBAB4) (Bacillus weihenstephanensis), this protein is Small ribosomal subunit protein uS2.